The following is a 152-amino-acid chain: S-ribosylhomocysteine lyase (152 aa).

Fe cation contacts are provided by His-53, His-57, and Cys-120.

This sequence belongs to the LuxS family. In terms of assembly, homodimer. The cofactor is Fe cation.

It catalyses the reaction S-(5-deoxy-D-ribos-5-yl)-L-homocysteine = (S)-4,5-dihydroxypentane-2,3-dione + L-homocysteine. Involved in the synthesis of autoinducer 2 (AI-2) which is secreted by bacteria and is used to communicate both the cell density and the metabolic potential of the environment. The regulation of gene expression in response to changes in cell density is called quorum sensing. Catalyzes the transformation of S-ribosylhomocysteine (RHC) to homocysteine (HC) and 4,5-dihydroxy-2,3-pentadione (DPD). This is S-ribosylhomocysteine lyase from Enterococcus faecalis (strain ATCC 700802 / V583).